The primary structure comprises 422 residues: Zinc finger and BTB domain-containing protein 42 (422 aa).

The BTB domain maps to 24 to 92 (CDCTVLVGDA…MYEGRLDLRS (69 aa)). Disordered stretches follow at residues 121–141 (KDRSLDPGNPAPGAEPAQPPC), 166–188 (AALPPRASGPPPCQVPEESDQAL), and 207–256 (LQTP…AAKG). Over residues 243–252 (HSPPKPPPVP) the composition is skewed to pro residues. C2H2-type zinc fingers lie at residues 294 to 316 (CICPLCSKLFPSSHVLQLHLSAH), 334 to 356 (PTCPLCGKTFSCTYTLKRHERTH), 362 to 384 (YTCVQCGKSFQYSHNLSRHTVVH), and 390 to 413 (HACRWCERRFTQSGDLYRHVRKFH).

The protein belongs to the krueppel C2H2-type zinc-finger protein family. ZBTB18 subfamily. Expressed in skeletal muscle (at protein level).

Its subcellular location is the cytoplasm. It is found in the nucleus. It localises to the nucleoplasm. Functionally, transcriptional repressor. Specifically binds DNA and probably acts by recruiting chromatin remodeling multiprotein complexes. This is Zinc finger and BTB domain-containing protein 42 (ZBTB42) from Homo sapiens (Human).